The primary structure comprises 102 residues: A-type ATP synthase subunit F (102 aa).

It belongs to the V-ATPase F subunit family. As to quaternary structure, has multiple subunits with at least A(3), B(3), C, D, E, F, H, I and proteolipid K(x).

The protein localises to the cell membrane. In terms of biological role, component of the A-type ATP synthase that produces ATP from ADP in the presence of a proton gradient across the membrane. The polypeptide is A-type ATP synthase subunit F (Thermococcus gammatolerans (strain DSM 15229 / JCM 11827 / EJ3)).